Consider the following 251-residue polypeptide: Triosephosphate isomerase (251 aa).

9–11 (NWK) contributes to the substrate binding site. His-96 functions as the Electrophile in the catalytic mechanism. The active-site Proton acceptor is Glu-168. Residues Gly-174, Ser-214, and 235 to 236 (GG) contribute to the substrate site.

The protein belongs to the triosephosphate isomerase family. In terms of assembly, homodimer.

It is found in the cytoplasm. The catalysed reaction is D-glyceraldehyde 3-phosphate = dihydroxyacetone phosphate. Its pathway is carbohydrate biosynthesis; gluconeogenesis. It participates in carbohydrate degradation; glycolysis; D-glyceraldehyde 3-phosphate from glycerone phosphate: step 1/1. In terms of biological role, involved in the gluconeogenesis. Catalyzes stereospecifically the conversion of dihydroxyacetone phosphate (DHAP) to D-glyceraldehyde-3-phosphate (G3P). The protein is Triosephosphate isomerase of Porphyromonas gingivalis (strain ATCC BAA-308 / W83).